Here is a 426-residue protein sequence, read N- to C-terminus: Transcription termination factor Rho (426 aa).

The Rho RNA-BD domain maps to 58-131; that stretch reads QSLARGYLDI…VRVEAVNGLD (74 aa). ATP-binding positions include 176–181, 188–193, and Arg219; these read GRGQRA and KAGKTT.

The protein belongs to the Rho family. Homohexamer. The homohexamer assembles into an open ring structure.

Functionally, facilitates transcription termination by a mechanism that involves Rho binding to the nascent RNA, activation of Rho's RNA-dependent ATPase activity, and release of the mRNA from the DNA template. The sequence is that of Transcription termination factor Rho from Deinococcus radiodurans (strain ATCC 13939 / DSM 20539 / JCM 16871 / CCUG 27074 / LMG 4051 / NBRC 15346 / NCIMB 9279 / VKM B-1422 / R1).